Reading from the N-terminus, the 102-residue chain is Small ribosomal subunit protein uS10 (102 aa).

Belongs to the universal ribosomal protein uS10 family. In terms of assembly, part of the 30S ribosomal subunit.

Its function is as follows. Involved in the binding of tRNA to the ribosomes. The chain is Small ribosomal subunit protein uS10 from Streptococcus suis (strain 98HAH33).